Here is a 380-residue protein sequence, read N- to C-terminus: Glucose-1-phosphate adenylyltransferase (380 aa).

Residues Y99, G164, 179–180 (EK), and S190 each bind alpha-D-glucose 1-phosphate.

This sequence belongs to the bacterial/plant glucose-1-phosphate adenylyltransferase family. Homotetramer.

The catalysed reaction is alpha-D-glucose 1-phosphate + ATP + H(+) = ADP-alpha-D-glucose + diphosphate. It participates in glycan biosynthesis; glycogen biosynthesis. Its function is as follows. Involved in the biosynthesis of ADP-glucose, a building block required for the elongation reactions to produce glycogen. Catalyzes the reaction between ATP and alpha-D-glucose 1-phosphate (G1P) to produce pyrophosphate and ADP-Glc. The protein is Glucose-1-phosphate adenylyltransferase of Bacillus subtilis (strain 168).